A 141-amino-acid chain; its full sequence is Hemoglobin subunit alpha (141 aa).

The 141-residue stretch at Val1–Arg141 folds into the Globin domain. Ser3 is subject to Phosphoserine. Lys7 and Lys11 each carry N6-succinyllysine. An N6-acetyllysine; alternate modification is found at Lys16. An N6-succinyllysine; alternate modification is found at Lys16. Tyr24 is modified (phosphotyrosine). Ser35 bears the Phosphoserine mark. Lys40 is subject to N6-succinyllysine. Ser49 is modified (phosphoserine). His58 is an O2 binding site. His87 serves as a coordination point for heme b. At Ser102 the chain carries Phosphoserine. Phosphothreonine is present on Thr108. Ser124 is modified (phosphoserine). Phosphothreonine occurs at positions 134 and 137. Phosphoserine is present on Ser138.

This sequence belongs to the globin family. Heterotetramer of two alpha chains and two beta chains. In terms of tissue distribution, red blood cells.

Involved in oxygen transport from the lung to the various peripheral tissues. In terms of biological role, hemopressin acts as an antagonist peptide of the cannabinoid receptor CNR1. Hemopressin-binding efficiently blocks cannabinoid receptor CNR1 and subsequent signaling. This is Hemoglobin subunit alpha (HBA) from Hippopotamus amphibius (Hippopotamus).